The following is a 322-amino-acid chain: MPVPGITVETILRDHDDLQLQLVTGEVGLSNRINSAEINRPGLSLTGFFDFFANDRIQILGKGEWAYLNSLSEEKLGEITDKFFEFHLNCIIYTHGNEPQVPFVERAKEKGIPLFKTEIATHRFITLISQILDRALAPRTMRHGVLIEVFGIGTLLTGRSGVGKSETALELIERGHRLVADDMVEIRRLSESYLIGSCSDLLRHHMEIRGLGILNIKDLFGVGSVRDHKLIELIINLKEWEEQTSGDYERTGIEQSMEEILGVSVPYIEIPVKPGRNIPIIVETAAMNQRLRKMGKNSAKEFSNKLNTYIQQSSIETNPIKD.

Catalysis depends on residues histidine 143 and lysine 164. Position 158–165 (158–165 (GRSGVGKS)) interacts with ATP. Position 165 (serine 165) interacts with Mg(2+). Aspartate 182 functions as the Proton acceptor; for phosphorylation activity. Proton donor; for dephosphorylation activity in the catalytic mechanism. An important for the catalytic mechanism of both phosphorylation and dephosphorylation region spans residues 206–215 (MEIRGLGILN). Glutamate 207 is a binding site for Mg(2+). Arginine 250 is an active-site residue. The tract at residues 271–276 (PVKPGR) is important for the catalytic mechanism of dephosphorylation.

This sequence belongs to the HPrK/P family. As to quaternary structure, homohexamer. The cofactor is Mg(2+).

The catalysed reaction is [HPr protein]-L-serine + ATP = [HPr protein]-O-phospho-L-serine + ADP + H(+). It catalyses the reaction [HPr protein]-O-phospho-L-serine + phosphate + H(+) = [HPr protein]-L-serine + diphosphate. Catalyzes the ATP- as well as the pyrophosphate-dependent phosphorylation of a specific serine residue in HPr, a phosphocarrier protein of the phosphoenolpyruvate-dependent sugar phosphotransferase system (PTS). HprK/P also catalyzes the pyrophosphate-producing, inorganic phosphate-dependent dephosphorylation (phosphorolysis) of seryl-phosphorylated HPr (P-Ser-HPr). In Leptospira biflexa serovar Patoc (strain Patoc 1 / Ames), this protein is HPr kinase/phosphorylase.